Consider the following 185-residue polypeptide: CASP-like protein 2C3 (185 aa).

Residues 1–13 (MAAAARVSEVKAE) are Cytoplasmic-facing. Residues 14 to 34 (GLLRGACAALAAAAALLVGLS) traverse the membrane as a helical segment. Residues 35–53 (TQTETVLLVRKKATVKDVQ) are Extracellular-facing. Residues 54-74 (ALWVLAMAAAAAAGYHLLQLL) traverse the membrane as a helical segment. The Cytoplasmic segment spans residues 75-104 (KCLYLGRVGGARPCRRSSRALAWTCLLLDK). The helical transmembrane segment at 105-125 (ACAYTTFATTVAAAQACVVAL) threads the bilayer. At 126–146 (DGAHAVQWTKLCNIYTRFCEQ) the chain is on the extracellular side. Residues 147–167 (VAGSLVLGMLAAVGTAVLSAA) traverse the membrane as a helical segment. The Cytoplasmic segment spans residues 168–185 (SARNVFRHYSSLETYAAH).

This sequence belongs to the Casparian strip membrane proteins (CASP) family. As to quaternary structure, homodimer and heterodimers.

The protein resides in the cell membrane. The polypeptide is CASP-like protein 2C3 (Zea mays (Maize)).